The sequence spans 148 residues: Lysozyme C (148 aa).

A signal peptide spans 1–18; sequence MKVLILLGLVLLSVMVQG. In terms of domain architecture, C-type lysozyme spans 19–148; the sequence is KVFERCELAR…VSQYIQGCGV (130 aa). Intrachain disulfides connect C24/C146, C48/C134, C83/C99, and C95/C113. Active-site residues include E53 and D71.

It belongs to the glycosyl hydrolase 22 family. In terms of assembly, monomer.

It localises to the secreted. The enzyme catalyses Hydrolysis of (1-&gt;4)-beta-linkages between N-acetylmuramic acid and N-acetyl-D-glucosamine residues in a peptidoglycan and between N-acetyl-D-glucosamine residues in chitodextrins.. Its function is as follows. Lysozymes have primarily a bacteriolytic function; those in tissues and body fluids are associated with the monocyte-macrophage system and enhance the activity of immunoagents. This is Lysozyme C (LYZ) from Saguinus oedipus (Cotton-top tamarin).